Reading from the N-terminus, the 145-residue chain is D-aminoacyl-tRNA deacylase (145 aa).

The Gly-cisPro motif, important for rejection of L-amino acids motif lies at 137–138; it reads GP.

Belongs to the DTD family. As to quaternary structure, homodimer.

It localises to the cytoplasm. The enzyme catalyses glycyl-tRNA(Ala) + H2O = tRNA(Ala) + glycine + H(+). It carries out the reaction a D-aminoacyl-tRNA + H2O = a tRNA + a D-alpha-amino acid + H(+). Its function is as follows. An aminoacyl-tRNA editing enzyme that deacylates mischarged D-aminoacyl-tRNAs. Also deacylates mischarged glycyl-tRNA(Ala), protecting cells against glycine mischarging by AlaRS. Acts via tRNA-based rather than protein-based catalysis; rejects L-amino acids rather than detecting D-amino acids in the active site. By recycling D-aminoacyl-tRNA to D-amino acids and free tRNA molecules, this enzyme counteracts the toxicity associated with the formation of D-aminoacyl-tRNA entities in vivo and helps enforce protein L-homochirality. The chain is D-aminoacyl-tRNA deacylase from Limosilactobacillus reuteri (strain DSM 20016) (Lactobacillus reuteri).